The following is a 433-amino-acid chain: MRRRRCDLQPKRTRMCDLQPKRTSMCDLPPKLVGEKILTRIPITSLRAVRSTCKLWNALTKDRVLGKAAAQFLGFMTMDSKVCSVRFHLRRSKEEEEDTMDLSIKQVDLLNQVEISRVYHCDGLLLCVAKDNSRVVVWNPYLGQTRWIRPRTESNIGDSYALGYDINRNHKILRMVQTRNVSVYRYEIYDLRSNSWRVLEVTPNGEMDPNHPLYGVSVKGNTYFFAHEDSSSGEIDEDGDIIDLEDFLLCFDFTTETFGLRLPLPFHSTIDATVTLSCVRDQQLAVLYHNEGLHSDDRFTTVEFWVTTSIEPNSVSWSKFLTVDMRPLALTGVRFDNDMGATFFIDEDEKVAVVFDLDGYLSTESARYHTAFISGKDGFFKPVTLGVAPNVGEPCPRTGHIPTTYRPPLVCSSTYLPSLVQVNQQRKRKERHV.

Residues 23 to 71 (TSMCDLPPKLVGEKILTRIPITSLRAVRSTCKLWNALTKDRVLGKAAAQ) enclose the F-box domain. 2 Kelch repeats span residues 170–216 (HKIL…LYGV) and 286–337 (VLYH…RFDN).

The polypeptide is F-box/kelch-repeat protein At1g24800 (Arabidopsis thaliana (Mouse-ear cress)).